Reading from the N-terminus, the 474-residue chain is MANAVGKITQVIGAVVDVQFNDHLPEILNALETENDGKRLVLEVAQHLGEGTVRTIAMDSSEGLVRGQEVTDTDGPITVPVGPGTLGRILNVVGEPVDEGGPVDAEERRGIHQDAPEFADQSTEAEVLVTGIKVVDLLAPYSKGGKIGLFGGAGVGKTVLIMELINNIAKVHSGVSVFAGVGERTREGNDLYHEMIESGVIVPDNLPESKIALVYGQMNEPPGARMRIALSGLTLAEQFRDATGADVLFFIDNIFRFTQAGSEVSALLGRIPSAVGYQPTLATDMGTMQERITSTKRGSITSIQAVYVPADDLTDPAPATTFAHLDATTVLSRAISELGIYPAVDPLDSSSRLMDPTIVGDEHYQVARDVQGILQRYKSLQDIIAILGMDELSEEDKLTVARARKIQRFLSQPFDVAKVFTGSDGIQVQLEDTISSFKAVVAGEYDHLPEGAFYMVGGIDEVIAKAEKMAADAA.

151-158 contacts ATP; sequence GGAGVGKT.

The protein belongs to the ATPase alpha/beta chains family. F-type ATPases have 2 components, CF(1) - the catalytic core - and CF(0) - the membrane proton channel. CF(1) has five subunits: alpha(3), beta(3), gamma(1), delta(1), epsilon(1). CF(0) has four main subunits: a(1), b(1), b'(1) and c(9-12).

It is found in the cell inner membrane. The catalysed reaction is ATP + H2O + 4 H(+)(in) = ADP + phosphate + 5 H(+)(out). Its function is as follows. Produces ATP from ADP in the presence of a proton gradient across the membrane. The catalytic sites are hosted primarily by the beta subunits. In Jannaschia sp. (strain CCS1), this protein is ATP synthase subunit beta.